We begin with the raw amino-acid sequence, 37 residues long: Large ribosomal subunit protein bL36 (37 aa).

The protein belongs to the bacterial ribosomal protein bL36 family.

The chain is Large ribosomal subunit protein bL36 from Marinomonas sp. (strain MWYL1).